The chain runs to 109 residues: Nucleoid-associated protein NT01EI_1109 (109 aa).

The interval 89-109 (KERMASVSSGMQLPPGFKMPF) is disordered.

This sequence belongs to the YbaB/EbfC family. In terms of assembly, homodimer.

It is found in the cytoplasm. It localises to the nucleoid. In terms of biological role, binds to DNA and alters its conformation. May be involved in regulation of gene expression, nucleoid organization and DNA protection. This chain is Nucleoid-associated protein NT01EI_1109, found in Edwardsiella ictaluri (strain 93-146).